The chain runs to 229 residues: UPF0173 metal-dependent hydrolase SH1218 (229 aa).

It belongs to the UPF0173 family.

In Staphylococcus haemolyticus (strain JCSC1435), this protein is UPF0173 metal-dependent hydrolase SH1218.